Reading from the N-terminus, the 406-residue chain is MANVLDELLDRGYIKQFTHEEETRKLLENEKVTFYIGFDPTADSLHVGHFIAMMFMAHMQRAGHRPIALLGGGTAMVGDPSGKTDMRKMLTKEQIQHNVDSIKKQMERFIDFSDDKALIVNNADWLLDLNYVDFLREVGVHFSVNRMLSAECFKQRLEKGLSFLEFNYMLMQGYDFYVLNQKYGCKMELGGDDQWSNMIAGVELVRRKAQGDAMAMTCTLLTNSQGQKMGKTVGGALWLDADKVSPFDFYQYWRNVDDADVEKCLALLTFLPMDEVRRLGALEGAEINGAKKILAFEVTKLVHGEEEAKKAEEAANALFSGGADMSNVPTVTIAKEDLGSTVLDIIAKTKIVPSKKEGRRLIEQGGLSINGEKIIDLTRTLNEDDFEDGSALIKRGKKNYNKIEIQ.

Tyr35 contributes to the L-tyrosine binding site. The 'HIGH' region motif lies at 40 to 49; that stretch reads PTADSLHVGH. Tyr168 and Gln172 together coordinate L-tyrosine. Residues 228 to 232 carry the 'KMSKS' region motif; that stretch reads KMGKT. Lys231 lines the ATP pocket. Positions 340-404 constitute an S4 RNA-binding domain; the sequence is STVLDIIAKT…RGKKNYNKIE (65 aa).

This sequence belongs to the class-I aminoacyl-tRNA synthetase family. TyrS type 1 subfamily. As to quaternary structure, homodimer.

The protein localises to the cytoplasm. It catalyses the reaction tRNA(Tyr) + L-tyrosine + ATP = L-tyrosyl-tRNA(Tyr) + AMP + diphosphate + H(+). Its function is as follows. Catalyzes the attachment of tyrosine to tRNA(Tyr) in a two-step reaction: tyrosine is first activated by ATP to form Tyr-AMP and then transferred to the acceptor end of tRNA(Tyr). The chain is Tyrosine--tRNA ligase from Clostridium botulinum (strain Alaska E43 / Type E3).